The following is a 701-amino-acid chain: Glycine--tRNA ligase beta subunit (701 aa).

It belongs to the class-II aminoacyl-tRNA synthetase family. As to quaternary structure, tetramer of two alpha and two beta subunits.

The protein localises to the cytoplasm. It catalyses the reaction tRNA(Gly) + glycine + ATP = glycyl-tRNA(Gly) + AMP + diphosphate. The sequence is that of Glycine--tRNA ligase beta subunit from Nitratidesulfovibrio vulgaris (strain DSM 19637 / Miyazaki F) (Desulfovibrio vulgaris).